The sequence spans 940 residues: Receptor-like protein 9b (940 aa).

The first 28 residues, 1–28 (MLMMFSPAFVMVMDLMVLVMMIMMMVSS), serve as a signal peptide directing secretion. Residues 29–895 (LDAHGHISCI…GDEETTIDME (867 aa)) are Extracellular-facing. 6 N-linked (GlcNAc...) asparagine glycosylation sites follow: Asn-53, Asn-63, Asn-66, Asn-101, Asn-115, and Asn-151. LRR repeat units lie at residues 108–136 (FGEL…SFER), 137–163 (LKNL…TASS), 165–185 (KTLI…ELIN), 186–211 (LRNL…NFHN), 213–232 (QGLD…LCQL), 233–255 (KNLR…CFDS), 257–279 (TQLQ…LIRN), 281–304 (DSVE…LIAN), 306–330 (SKLK…SLQP), 331–354 (KFQL…IQHQ), 355–378 (KDLH…LLEK), 379–402 (YPNL…RLLN), 403–426 (HTLQ…IGKV), 427–450 (LPNI…SFGE), 452–475 (KDIK…FLIG), and 477–502 (SSLH…NFGS). Residues Asn-270 and Asn-304 are each glycosylated (N-linked (GlcNAc...) asparagine). N-linked (GlcNAc...) asparagine glycans are attached at residues Asn-361, Asn-389, and Asn-402. 2 N-linked (GlcNAc...) asparagine glycosylation sites follow: Asn-434 and Asn-463. The stretch at 503–522 (LVVLIANNNLFTGIADGLRN) is one LRR 17; degenerate repeat. 11 LRR repeats span residues 523 to 546 (VQSL…WFGG), 547 to 570 (FFFA…LFSK), 571 to 593 (PTFK…HFTG), 595 to 615 (DMSL…STLI), 616 to 639 (KDVL…VKNE), 641 to 662 (ILSL…LCGL), 663 to 686 (RSIR…LNNV), 752 to 776 (FNFM…LGDL), 777 to 799 (QRIR…SFSN), 801 to 824 (TDIE…LSKL), and 826 to 849 (YMVV…KFST). Asn-685 carries an N-linked (GlcNAc...) asparagine glycan. 2 N-linked (GlcNAc...) asparagine glycosylation sites follow: Asn-783 and Asn-799. Residues Asn-831, Asn-836, Asn-867, and Asn-873 are each glycosylated (N-linked (GlcNAc...) asparagine). A helical membrane pass occupies residues 896–916 (IFYWSLAATYGVTWITFIVFL). At 917 to 940 (CFDSPWRRVWFHFVDAFISLFKCV) the chain is on the cytoplasmic side.

This sequence belongs to the RLP family.

It is found in the cell membrane. This chain is Receptor-like protein 9b, found in Arabidopsis thaliana (Mouse-ear cress).